The chain runs to 343 residues: N-acetyl-gamma-glutamyl-phosphate reductase (343 aa).

Residue C150 is part of the active site.

Belongs to the NAGSA dehydrogenase family. Type 1 subfamily.

It localises to the cytoplasm. It carries out the reaction N-acetyl-L-glutamate 5-semialdehyde + phosphate + NADP(+) = N-acetyl-L-glutamyl 5-phosphate + NADPH + H(+). It participates in amino-acid biosynthesis; L-arginine biosynthesis; N(2)-acetyl-L-ornithine from L-glutamate: step 3/4. Catalyzes the NADPH-dependent reduction of N-acetyl-5-glutamyl phosphate to yield N-acetyl-L-glutamate 5-semialdehyde. This is N-acetyl-gamma-glutamyl-phosphate reductase from Nitrosococcus oceani (strain ATCC 19707 / BCRC 17464 / JCM 30415 / NCIMB 11848 / C-107).